A 351-amino-acid chain; its full sequence is MSSDEQKPEVNGYWTSVKNFSSSAATSINNATTSAWNSEFAASTSATVKDFSTSATKSIGEAATSAWNSETASTATSAISEAAKNARSWYDSSSEENEELEPSGHGFRGGIAALSRNASHYVISTVGRSSNILNIFDKTNKSSLGNPRWWIRFDRPHGNVDFHHININKAVTGLKDPHIPLTPTTAKTIGVLGKVAEKANDVAPLLTTAAMIYEAYRVGQEVHKDMNHGTTRNTIKTLAATSGTYSSGSIGAYAGSVIGTSIFPGLGTIFGAVVGGIVGGHFGGHYSHVATENALNHVKWDVVTFVCDGCDEEYTWKKYQEIEGTCCTRFNNKRQDSVDYWFKKLETNHDF.

This is an uncharacterized protein from Caenorhabditis elegans.